Reading from the N-terminus, the 431-residue chain is Serine--tRNA ligase (431 aa).

Position 236 to 238 (236 to 238) interacts with L-serine; sequence TAE. Position 267 to 269 (267 to 269) interacts with ATP; it reads RSE. Glu-290 provides a ligand contact to L-serine. 354-357 contacts ATP; sequence EISS. Residue Ser-389 coordinates L-serine.

This sequence belongs to the class-II aminoacyl-tRNA synthetase family. Type-1 seryl-tRNA synthetase subfamily. In terms of assembly, homodimer. The tRNA molecule binds across the dimer.

The protein resides in the cytoplasm. It carries out the reaction tRNA(Ser) + L-serine + ATP = L-seryl-tRNA(Ser) + AMP + diphosphate + H(+). The catalysed reaction is tRNA(Sec) + L-serine + ATP = L-seryl-tRNA(Sec) + AMP + diphosphate + H(+). Its pathway is aminoacyl-tRNA biosynthesis; selenocysteinyl-tRNA(Sec) biosynthesis; L-seryl-tRNA(Sec) from L-serine and tRNA(Sec): step 1/1. Its function is as follows. Catalyzes the attachment of serine to tRNA(Ser). Is also able to aminoacylate tRNA(Sec) with serine, to form the misacylated tRNA L-seryl-tRNA(Sec), which will be further converted into selenocysteinyl-tRNA(Sec). This Janthinobacterium sp. (strain Marseille) (Minibacterium massiliensis) protein is Serine--tRNA ligase.